A 343-amino-acid chain; its full sequence is C5a anaphylatoxin chemotactic receptor 2 (343 aa).

Topologically, residues 1–44 (MLNDTTSKDYEYEYDQEQYSDLLNVPVDCPAGNCFSNDAYLIVL) are extracellular. A glycan (N-linked (GlcNAc...) asparagine) is linked at N3. The chain crosses the membrane as a helical span at residues 45–67 (LGLYSVIFLVGVPGNTLLAWVTW). The Cytoplasmic portion of the chain corresponds to 68 to 78 (KESRHRLGASW). The helical transmembrane segment at 79 to 101 (FLHLTMADLLCCVSLPFLAVPIA) threads the bilayer. Residues 102–120 (QKGHWPYGTAGCWLLSSIT) lie on the Extracellular side of the membrane. Residues C113 and C192 are joined by a disulfide bond. The chain crosses the membrane as a helical span at residues 121–143 (VLSMYASVLLLTGLSGDLFLLAF). The Cytoplasmic portion of the chain corresponds to 144 to 155 (RPSWKNADQRTC). Residues 156-178 (GVRVVQVSSWMLALLLTVPGAVY) traverse the membrane as a helical segment. The Extracellular portion of the chain corresponds to 179–208 (RKLLQEHYPPRLVCGTNYGGSVTAEVTITT). The chain crosses the membrane as a helical span at residues 209 to 231 (VRFLFGFLVPLVFMASCHGILQR). The Cytoplasmic portion of the chain corresponds to 232-243 (QMARRHWPLGTA). Residues 244 to 266 (VVVGFFICWTPFHLLRVIIAVAS) form a helical membrane-spanning segment. Over 267-280 (SHSPLLAWALEAEP) the chain is Extracellular. Residues 281-300 (LVTGLALAHSALNPIMFLYF) form a helical membrane-spanning segment. At 301-343 (GRKQLCKSLQAACHWALRDLQDEEESAVTKVSTSQEMVSEMPV) the chain is on the cytoplasmic side. At S326 the chain carries Phosphoserine.

This sequence belongs to the G-protein coupled receptor 1 family. As to quaternary structure, interacts with C3 (the anaphylatoxin peptide C3a and the adipogenic hormone ASP); the interaction occurs with higher affinity for ASP, enhancing the phosphorylation and activation of GPR77, recruitment of ARRB2 to the cell surface and endocytosis of GRP77.

The protein localises to the cell membrane. In terms of biological role, receptor for the chemotactic and inflammatory C3a, C4a and C5a anaphylatoxin peptides and also for their dearginated forms ASP/C3adesArg, C4adesArg and C5adesArg respectively. Couples weakly to G(i)-mediated signaling pathways. This chain is C5a anaphylatoxin chemotactic receptor 2 (C5ar2), found in Rattus norvegicus (Rat).